A 195-amino-acid polypeptide reads, in one-letter code: 2-cysteine peroxiredoxin, chloroplastic (195 aa).

The 159-residue stretch at 3–161 (IRVGQKAPDF…ALRTLQAIQY (159 aa)) folds into the Thioredoxin domain. The Cysteine sulfenic acid (-SOH) intermediate role is filled by C49.

Belongs to the peroxiredoxin family. AhpC/Prx1 subfamily. Homodimer; disulfide-linked, upon oxidation.

The protein resides in the plastid. It is found in the chloroplast. It catalyses the reaction a hydroperoxide + [thioredoxin]-dithiol = an alcohol + [thioredoxin]-disulfide + H2O. Functionally, thiol-specific peroxidase that catalyzes the reduction of hydrogen peroxide and organic hydroperoxides to water and alcohols, respectively. Plays a role in cell protection against oxidative stress by detoxifying peroxides. The protein is 2-cysteine peroxiredoxin, chloroplastic of Chattonella marina var. antiqua (Red tide flagellate).